Consider the following 52-residue polypeptide: Light-harvesting protein B800/830/1020 alpha-1 chain (52 aa).

Residues 1–12 are Cytoplasmic-facing; sequence MWRIWKVFDPRR. The helical transmembrane segment at 13-33 threads the bilayer; that stretch reads ILIATAIWLIIIALTIHVILM. His-29 lines the a bacteriochlorophyll pocket. Residues 34–52 lie on the Periplasmic side of the membrane; that stretch reads TTERFNWLEGAPAAEYYSS.

The protein belongs to the antenna complex alpha subunit family. In terms of assembly, the core complex is formed by different alpha and beta chains, binding bacteriochlorophyll molecules, and arranged most probably in tetrameric structures disposed around the reaction center. The non-pigmented gamma chains may constitute additional components.

The protein localises to the cell inner membrane. Functionally, antenna complexes are light-harvesting systems, which transfer the excitation energy to the reaction centers. The polypeptide is Light-harvesting protein B800/830/1020 alpha-1 chain (Halorhodospira halochloris (Ectothiorhodospira halochloris)).